A 679-amino-acid polypeptide reads, in one-letter code: Stress-70 protein, mitochondrial (679 aa).

Residues 1–46 (MISASRAVAARLVGAAASRGPTAARHQDGWNGLSHEAFRIVSRRDY) constitute a mitochondrion transit peptide. The tract at residues 1 to 432 (MISASRAVAA…IQGGVLAGDV (432 aa)) is interaction with NFS1. Residues threonine 63 and asparagine 64 each contribute to the ADP site. Residues 63 to 431 (TNSCVAVMEG…AIQGGVLAGD (369 aa)) form a nucleotide-binding domain (NBD) region. Position 76 is an N6-acetyllysine (lysine 76). Threonine 87 carries the phosphothreonine modification. Residues lysine 135 and lysine 138 each carry the N6-acetyllysine; alternate modification. N6-succinyllysine; alternate occurs at positions 135 and 138. Lysine 143 is subject to N6-acetyllysine. Position 206 is an N6-acetyllysine; alternate (lysine 206). Lysine 206 is subject to N6-succinyllysine; alternate. Lysine 206 carries the N6-malonyllysine; alternate modification. An N6-acetyllysine mark is found at lysine 234 and lysine 288. Residue lysine 300 is modified to N6-acetyllysine; alternate. Lysine 300 bears the N6-succinyllysine; alternate mark. The ADP site is built by glutamate 313, lysine 316, and serine 320. Lysine 368 carries the post-translational modification N6-succinyllysine. ADP-binding residues include glycine 388 and arginine 391. Lysine 394 carries the N6-succinyllysine modification. At serine 408 the chain carries Phosphoserine. The interval 432 to 441 (VTDVLLLDVT) is interdomain linker. Residues 432 to 679 (VTDVLLLDVT…QKEDQKEEKQ (248 aa)) are interaction with FXN and ISCU. The substrate-binding domain (SBD) stretch occupies residues 442 to 679 (PLSLGIETLG…QKEDQKEEKQ (238 aa)). At arginine 513 the chain carries Omega-N-methylarginine. Lysine 567 and lysine 600 each carry N6-acetyllysine; alternate. Lysine 567 and lysine 600 each carry N6-succinyllysine; alternate. The residue at position 610 (lysine 610) is an N6-succinyllysine. Lysine 612 carries the post-translational modification N6-acetyllysine. Lysine 646 carries the post-translational modification N6-acetyllysine; alternate. N6-succinyllysine; alternate is present on lysine 646. The segment at 656-679 (ASEREGSGSSGTGEQKEDQKEEKQ) is disordered. Over residues 669 to 679 (EQKEDQKEEKQ) the composition is skewed to basic and acidic residues.

Belongs to the heat shock protein 70 family. As to quaternary structure, interacts strongly with the intermediate form of FXN and weakly with its mature form. Interacts with HSCB. Associates with the mitochondrial contact site and cristae organizing system (MICOS) complex, composed of at least MICOS10/MIC10, CHCHD3/MIC19, CHCHD6/MIC25, APOOL/MIC27, IMMT/MIC60, APOO/MIC23/MIC26 and QIL1/MIC13. This complex was also known under the names MINOS or MitOS complex. The MICOS complex associates with mitochondrial outer membrane proteins SAMM50, MTX1, MTX2 and DNAJC11, mitochondrial inner membrane protein TMEM11 and with HSPA9. Interacts with DNLZ, the interaction is required to prevent self-aggregation. Interacts with TESPA1. Interacts with PDPN. Interacts with NFU1, NFS1 and ISCU. Interacts with TP53; the interaction promotes TP53 degradation. Interacts (via SBD domain) with UBXN2A; the interaction with UBXN2A inhibits HSPA9/MOT-2 interaction with and degradation of TP53, thereby promotes TP53 translocation to the nucleus. Interacts with ITPR1 AND VDAC1; this interaction couples ITPR1 to VDAC1. Component of the TIM23 mitochondrial inner membrane pre-sequence translocase complex.

It is found in the mitochondrion. It localises to the nucleus. The protein localises to the nucleolus. The protein resides in the cytoplasm. Its subcellular location is the mitochondrion matrix. It carries out the reaction ATP + H2O = ADP + phosphate + H(+). The chaperone activity is regulated by ATP-induced allosteric coupling of the nucleotide-binding (NBD) and substrate-binding (SBD) domains. ATP binding in the nucleotide-binding pocket (NBP) leads to a conformational change in the NBD, which is transferred through the interdomain linker (IDL) to the substrate-binding domain (SBD). This elicits a reduced substrate affinity and a faster substrate exchange rate. Upon hydrolysis of ATP to ADP, the protein undergoes a conformational change that increases its affinity for substrate proteins. It cycles through repeated phases of ATP hydrolysis and nucleotide exchange, facilitating repeated cycles of substrate binding and release. Functions in collaboration with co-chaperones. Functions with the co-chaperone, DNLZ, to maintain solubility and regulate ATP hydrolysis. Nucleotide exchange factors, GRPEL1 and GRPEL2, accelerate nucleotide exchange. Its function is as follows. Mitochondrial chaperone that plays a key role in mitochondrial protein import, folding, and assembly. Plays an essential role in the protein quality control system, the correct folding of proteins, the re-folding of misfolded proteins, and the targeting of proteins for subsequent degradation. These processes are achieved through cycles of ATP binding, ATP hydrolysis, and ADP release, mediated by co-chaperones. In mitochondria, it associates with the TIM (translocase of the inner membrane) protein complex to assist in the import and folding of mitochondrial proteins. Plays an important role in mitochondrial iron-sulfur cluster (ISC) biogenesis, interacts with and stabilizes ISC cluster assembly proteins FXN, NFU1, NFS1 and ISCU. Regulates erythropoiesis via stabilization of ISC assembly. Regulates mitochondrial calcium-dependent apoptosis by coupling two calcium channels, ITPR1 and VDAC1, at the mitochondria-associated endoplasmic reticulum (ER) membrane to facilitate calcium transport from the ER lumen to the mitochondria intermembrane space, providing calcium for the downstream calcium channel MCU, which releases it into the mitochondrial matrix. Although primarily located in the mitochondria, it is also found in other cellular compartments. In the cytosol, it associates with proteins involved in signaling, apoptosis, or senescence. It may play a role in cell cycle regulation via its interaction with and promotion of degradation of TP53. May play a role in the control of cell proliferation and cellular aging. Protects against reactive oxygen species (ROS). Extracellular HSPA9 plays a cytoprotective role by preventing cell lysis following immune attack by the membrane attack complex by disrupting formation of the complex. The chain is Stress-70 protein, mitochondrial from Pongo abelii (Sumatran orangutan).